Here is a 340-residue protein sequence, read N- to C-terminus: Anthranilate phosphoribosyltransferase (340 aa).

Residues Gly83, 86 to 87 (GD), Thr91, 93 to 96 (NVST), 111 to 119 (KHGNRSVSS), and Ser123 contribute to the 5-phospho-alpha-D-ribose 1-diphosphate site. Position 83 (Gly83) interacts with anthranilate. Position 95 (Ser95) interacts with Mg(2+). Asn114 provides a ligand contact to anthranilate. Residue Arg169 coordinates anthranilate. 2 residues coordinate Mg(2+): Asp228 and Glu229.

It belongs to the anthranilate phosphoribosyltransferase family. Homodimer. Mg(2+) serves as cofactor.

It carries out the reaction N-(5-phospho-beta-D-ribosyl)anthranilate + diphosphate = 5-phospho-alpha-D-ribose 1-diphosphate + anthranilate. The protein operates within amino-acid biosynthesis; L-tryptophan biosynthesis; L-tryptophan from chorismate: step 2/5. In terms of biological role, catalyzes the transfer of the phosphoribosyl group of 5-phosphorylribose-1-pyrophosphate (PRPP) to anthranilate to yield N-(5'-phosphoribosyl)-anthranilate (PRA). The chain is Anthranilate phosphoribosyltransferase from Aquifex aeolicus (strain VF5).